The chain runs to 341 residues: Aspartate carbamoyltransferase catalytic subunit (341 aa).

Carbamoyl phosphate is bound by residues R74 and T75. L-aspartate is bound at residue K102. 3 residues coordinate carbamoyl phosphate: R124, H152, and Q155. L-aspartate-binding residues include R190 and R244. The carbamoyl phosphate site is built by G285 and P286.

The protein belongs to the aspartate/ornithine carbamoyltransferase superfamily. ATCase family. In terms of assembly, heterododecamer (2C3:3R2) of six catalytic PyrB chains organized as two trimers (C3), and six regulatory PyrI chains organized as three dimers (R2).

It catalyses the reaction carbamoyl phosphate + L-aspartate = N-carbamoyl-L-aspartate + phosphate + H(+). The protein operates within pyrimidine metabolism; UMP biosynthesis via de novo pathway; (S)-dihydroorotate from bicarbonate: step 2/3. Catalyzes the condensation of carbamoyl phosphate and aspartate to form carbamoyl aspartate and inorganic phosphate, the committed step in the de novo pyrimidine nucleotide biosynthesis pathway. This chain is Aspartate carbamoyltransferase catalytic subunit, found in Novosphingobium aromaticivorans (strain ATCC 700278 / DSM 12444 / CCUG 56034 / CIP 105152 / NBRC 16084 / F199).